We begin with the raw amino-acid sequence, 513 residues long: CUGBP Elav-like family member 2 (513 aa).

RRM domains lie at 35–118, 127–207, and 428–506; these read IKMF…PADS, RKLF…FADT, and ANLF…LKRS.

It belongs to the CELF/BRUNOL family.

The protein resides in the nucleus. It localises to the cytoplasm. RNA-binding protein implicated in the regulation of several post-transcriptional events. May be involved in pre-mRNA alternative splicing, mRNA translation repression and stability. The sequence is that of CUGBP Elav-like family member 2 (celf2) from Xenopus tropicalis (Western clawed frog).